Consider the following 556-residue polypeptide: RING finger protein 207 (556 aa).

The RING-type zinc-finger motif lies at 25 to 64; that stretch reads CPLCHAQYERPCLLDCFHEFCAGCLRGRAADGRLACPLCQ. The B box-type; atypical zinc finger occupies 93–145; sequence TEVVRCANCDLECGKQDAETTYFCNTCGQPLCARCRDETHRARMFARHDIVAL. Zn(2+) contacts are provided by C98, C101, C127, and H132. Coiled coils occupy residues 218 to 273 and 385 to 425; these read TREA…NKAE and FTEH…SLIK. The segment at 517–556 is disordered; it reads FQVPVDEPSDHPQNTHDDGVNAEAPARVSTLKPAMEKEVS. Residues 524–535 show a composition bias toward basic and acidic residues; sequence PSDHPQNTHDDG.

In terms of assembly, interacts with the core-glycosylated, but not the fully glycosylated form of KCNH2/HERG. Interacts with DNAJA1 and HSPA8. Interacts (via the C-terminus) with HSPA1A; this interaction additively increases KCNH2 expression.

The protein localises to the cytoplasm. Plays a role in cardiac repolarization possibly by stabilizing membrane expression of the potassium channel KCNH2/HERG, or by assisting its synthesis, folding or export from the endoplasmic reticulum, in a heat shock protein-dependent manner. This is RING finger protein 207 (RNF207) from Bos taurus (Bovine).